The following is a 252-amino-acid chain: uncharacterized protein (252 aa).

Positions 3–58 (AKDRIQAIKQMVANDKKVTVSNLSGIFQVTEETIRRDLEKLEDEGFLTRTYGGAVL) constitute an HTH deoR-type domain. The segment at residues 20-39 (VTVSNLSGIFQVTEETIRRD) is a DNA-binding region (H-T-H motif).

This is an uncharacterized protein from Escherichia coli (strain K12).